The following is a 234-amino-acid chain: Protein CIST1 (234 aa).

The first 24 residues, 1 to 24 (MACPQLPPLLLLVLVVLLKAGVNY), serve as a signal peptide directing secretion. Over 25-180 (NTPFTDIVTS…GPRELHRNPS (156 aa)) the chain is Extracellular. A compositionally biased stretch (polar residues) spans 41 to 121 (SPVSSLISSP…THPSSGSPSA (81 aa)). Residues 41-174 (SPVSSLISSP…PAPGDTGPRE (134 aa)) are disordered. A compositionally biased stretch (low complexity) spans 122–140 (ELTPSSHSTLPSSESLTPH). Over residues 141–159 (WSPTSHSPGTEPLTSTDQT) the composition is skewed to polar residues. Residues 181–201 (VVVVVCLLVSLLLIGSVVMAV) form a helical membrane-spanning segment. Over 202-234 (RFCHRNESKFENLDEVSMGSVNDRLSFAHHLQE) the chain is Cytoplasmic.

It localises to the membrane. The polypeptide is Protein CIST1 (Homo sapiens (Human)).